Here is a 157-residue protein sequence, read N- to C-terminus: Endoribonuclease YbeY (157 aa).

His-116, His-120, and His-126 together coordinate Zn(2+).

The protein belongs to the endoribonuclease YbeY family. Zn(2+) serves as cofactor.

The protein resides in the cytoplasm. In terms of biological role, single strand-specific metallo-endoribonuclease involved in late-stage 70S ribosome quality control and in maturation of the 3' terminus of the 16S rRNA. This Blochmanniella pennsylvanica (strain BPEN) protein is Endoribonuclease YbeY.